The following is a 248-amino-acid chain: Carboxy-S-adenosyl-L-methionine synthase (248 aa).

S-adenosyl-L-methionine is bound by residues tyrosine 40, 65–67 (GCS), 95–96 (DN), 123–124 (DI), asparagine 138, and arginine 205.

The protein belongs to the class I-like SAM-binding methyltransferase superfamily. Cx-SAM synthase family. As to quaternary structure, homodimer.

It carries out the reaction prephenate + S-adenosyl-L-methionine = carboxy-S-adenosyl-L-methionine + 3-phenylpyruvate + H2O. Catalyzes the conversion of S-adenosyl-L-methionine (SAM) to carboxy-S-adenosyl-L-methionine (Cx-SAM). The protein is Carboxy-S-adenosyl-L-methionine synthase of Hahella chejuensis (strain KCTC 2396).